The sequence spans 321 residues: uncharacterized protein (321 aa).

Positions 1 to 12 are enriched in basic residues; that stretch reads MSMFLKKQKKTK. Disordered regions lie at residues 1–59 and 71–289; these read MSMF…MRKT and EDCT…GPED. A compositionally biased stretch (basic and acidic residues) spans 50 to 59; it reads DGIKETMRKT. Residues 99–115 show a composition bias toward acidic residues; sequence DDSDSESSEDGGEDDEE. Over residues 156–175 the composition is skewed to low complexity; that stretch reads SDSSSSSSSSSDSESSSSSD. Positions 179–189 are enriched in basic and acidic residues; that stretch reads DGDRSTPEPDI. Residues 231-242 are compositionally biased toward low complexity; sequence EPSPLRAAAAAA.

This is an uncharacterized protein from Equus caballus (Horse).